The following is a 699-amino-acid chain: Auxin response factor 1 (699 aa).

The segment at residues 122–224 (FCKILTPSDT…EQRVGVRRLV (103 aa)) is a DNA-binding region (TF-B3). 2 disordered regions span residues 539 to 565 (TTTDDKSSVGAGEASAKGTGSHEDSGQ) and 680 to 699 (EPHPKLLSSANPEQDQKTGF). Positions 595-684 (RTRIKVQMHG…DEKKIEPHPK (90 aa)) constitute a PB1 domain. Over residues 687–699 (SSANPEQDQKTGF) the composition is skewed to polar residues.

It belongs to the ARF family. In terms of assembly, homodimers and heterodimers. In terms of tissue distribution, expressed in roots, culms, leaves and young panicles.

Its subcellular location is the nucleus. Its function is as follows. Auxin response factors (ARFs) are transcriptional factors that bind specifically to the DNA sequence 5'-TGTCTC-3' found in the auxin-responsive promoter elements (AuxREs). This is Auxin response factor 1 (ARF1) from Oryza sativa subsp. japonica (Rice).